We begin with the raw amino-acid sequence, 298 residues long: ATP synthase gamma chain (298 aa).

The protein belongs to the ATPase gamma chain family. As to quaternary structure, F-type ATPases have 2 components, CF(1) - the catalytic core - and CF(0) - the membrane proton channel. CF(1) has five subunits: alpha(3), beta(3), gamma(1), delta(1), epsilon(1). CF(0) has three main subunits: a, b and c.

It localises to the cell inner membrane. Functionally, produces ATP from ADP in the presence of a proton gradient across the membrane. The gamma chain is believed to be important in regulating ATPase activity and the flow of protons through the CF(0) complex. The polypeptide is ATP synthase gamma chain (Desulfosudis oleivorans (strain DSM 6200 / JCM 39069 / Hxd3) (Desulfococcus oleovorans)).